Consider the following 2216-residue polypeptide: MSEYLDELKELIRKWIPDEEMYIEQKTSFLSQVNLRSVVIEGLKLLSIIIEIDSCKKHGCVHNKNKTVNQILRDHRIVGPTLPDVVPDGYRVIGSTIILLEAFVRVSHESFEIKYKSDFEKLMQLSKDLSRCGLTLIPVVDGRSNYYTEHFPDWTIERMRWLILKITNFLRDNGEEIEELEYSRLVYSLSNMENKNLGLESLKILKEEGLDYKAKLMSVMRDGVNSNMSASECRVEMAKIYDQFSFLRKNGLYKDVYCKTSRTEIINWLKDHKLILLSGETRTAMLDERQCGYCRNHMFRILASLIKNKRHYQSLTNPKKCGSIQSHKKLLSDCNKIKGLKVLNTRRFTLLCLDVIILNSLLELIDAGEIDNEFLVNNHFKSVNDRLVSIDLIIDRLNKKLMSKPNWIGSVKYKMKRTLEIHGLYYVSKWLKQVDIDSWYEFKMMREHSDKCVKPTLKYKKDAARKCGQPEFGSSTILDDEVFLEYLEALSTLSLGLVNSMKTSSAAKFLINDKSNYFGTVQCNECYFQDLDKSYNSLLIYQKTGERSRCYGLMFKSEQFENVYEVGESFYADPKRFFLPIMSSEVILKMCVEMLSWLDWLSEQELKAFKSKLYTLIINILTVPSKRVQVYLQGFRYLIMAFVNELHFKELQNKLKVQPLTISECYVFTLMDDLVHLLLTEAQEENMSKVFRFVLNLSYLCHLVTKETPDRLTDQIKCFEKFLEPKVDFNSVFVNLDSSPHLSGEVEEKFIKDLNRLFSKDLGVEDLKDPGISKELISLCASCFNCGLLPMSKVLKHDPQSPSFTSTALDISSNKSVVVPKLDEVGETVTQYDYQSLLSSTVVDMAQSFKDKLKYKLDRKSIQFAIFKRLTNMVLKRKTDHDVKDDLDDELSEIVDDDTLRVINDVEANVSECLSKMGKISRAATVGGQNNLGRFEKIDTLKRLWDRESMNFILMETSLHEVKDFDPSIFPIEKYKSMCELVYDSKMKSEFFTDEVLKFCPLDLLVKNLATKCYLEEDFFECFKYILISAGFDNRVGRYDHRSRSRLGFKDEAILIKENSRISSRESNSEAISRRLDKSFFTNSSLRNLCFYSEESPTYRSTVSSSVGKLKFGLSYKEQVGSNRELYVGDLNTKLTSRLIEDYFESLTSECKFSCLNNDAEFERALLDMKCVVRLSGLAVSMDHSKWGPYMSPAIFNILFSNLNLELNDGVFIDKAPIENLLNWHLHKIVEVPYNVIDAYLKGYTKRRLGLMDRSSTSITEDFIFNWFAKGVVPSHISSVLDMGQGILHNTSDYYGLLTEQFILQCLDFIFDIKSTAYTSSDDEILLSNSPSLKKVDEDSLDINKCQEVLEFHNYLSSKFNKFVSPKTVAGSFASEFKSRFFIWSQEVPLLTKFVAAALHNVKAKSPHQLAETVDTILDQCIANGVSIEVVKAISRRTNKLITYSGHPKNPFLCVENTDLKDWVDGSRGYRLQRSVESLFNDDDLPLTIRNSCRSLFHRIRSGDIQEEFLINALQTSPDECLAKMLRLSDVDESTIDKVLEFRWLNLRAHGDLRLVLRTKVMSGTRILDREEVPSLVKSVQSKLSKNFVRGAKKIITDAINKSAFQSSICSGFIGFCKSMGSKCVRDGNGSFQYIKHFLKSIILHSHCEVCKPEMSVFCRAALEELKPFSRPIFWDYFSLTFSNACELGNWVFSNVTIPKRTPTTVNPNFFWPVKPGSHTELEDKVNMNHVLYSIKRNFPDLFDEHIAPFLSDLNSLKISWIQRIKFLDLCVAMDMSSECLGIISHIMRRKREELYIVKQNELSVAHMRDSSPMEAGYQLNSSEICHNFLCQLVFESMLHPVLLTTGQFKKYFWFGEVELLPNEADHDLGQLTQFVMDCKTLNISRCMSLDDLDVGYVHSSILMGDIYVNFSSFLHLLDWENRRNYKTFDEIILCSREDTIPMEIDFTISHSRKSFKFKYERKTNYHIKSKVLVQKVDIEEAQNQGFDILELEVHEIECFVSGSQGNHISLDGVGLIPLHPLFSGKEFLDVNKLLIKQDENFESTHSVFSKVKLNFSNHTKDLKNKYSYKLQGPEYNMNPLHLYRGQIMENNFVISRLDVQITSRSVFLALEALESEDRIPFLISLHIYTRSNNKKENSCFIRMTQSDLCLLIDSYEKEFTEVLKSLSDWMDFGDFALCFSNNLNCIMIADPDGQFKLKGRQCRKVSSASAPLEID.

Residues 26-289 form an endonuclease region; it reads KTSFLSQVNL…ETRTAMLDER (264 aa). Mn(2+)-binding residues include glutamate 51, aspartate 88, and glutamate 101. Lysine 114 is a catalytic residue. In terms of domain architecture, RdRp catalytic spans 1167–1364; it reads LDMKCVVRLS…YLSSKFNKFV (198 aa). Aspartate 1323 serves as a coordination point for Mg(2+).

Belongs to the Bunyavirales RNA polymerase family. As to quaternary structure, homomultimer; the oligomeric structure is essential for the polymerase activity. Interacts with nucleoprotein N. Interacts with protein Z; this interaction inhibits viral transcription and replication, Z partially blocks the product exit tunnel for the releasing nascent RNA product. It depends on Mn(2+) as a cofactor. Requires Mg(2+) as cofactor.

Its subcellular location is the virion. The protein localises to the host cytoplasm. The enzyme catalyses RNA(n) + a ribonucleoside 5'-triphosphate = RNA(n+1) + diphosphate. RNA-dependent RNA polymerase, which is responsible for the replication and transcription of the viral RNA genome using antigenomic RNA as an intermediate. During transcription, synthesizes subgenomic RNAs and assures their capping by a cap-snatching mechanism, which involves the endonuclease activity cleaving the host capped pre-mRNAs. These short capped RNAs are then used as primers for viral transcription. The 3'-end of subgenomic mRNAs molecules are heterogeneous and not polyadenylated. The replicase function is to direct synthesis of antigenomic and genomic RNA which are encapsidated and non capped. As a consequence of the use of the same enzyme for both transcription and replication, these mechanisms need to be well coordinated. These processes may be regulated by proteins N and Z in a dose-dependent manner. Z protein inhibits the viral polymerase L und thus the viral transcription and RNA synthesis. The sequence is that of RNA-directed RNA polymerase L from Bear Canyon mammarenavirus (isolate Mouse/United States/AV A0070039/2000) (BCNV).